The following is a 47-amino-acid chain: KTCENLSGTFKGPCIPDGNCNKHCRNNEHLLSGRCRDDFRCWCTNRC.

4 cysteine pairs are disulfide-bonded: Cys3–Cys47, Cys14–Cys35, Cys20–Cys41, and Cys24–Cys43.

Belongs to the DEFL family. Epidermis and vascular bundles of pods, stems, roots, leaves and wet or dry seeds.

Functionally, possesses antifungal activity sensitive to inorganic cations. The polypeptide is Defensin-2 (Pisum sativum (Garden pea)).